The sequence spans 215 residues: Ribose-5-phosphate isomerase A (215 aa).

Residues 26 to 29 (TGST), 79 to 82 (DGAD), and 92 to 95 (KGGG) contribute to the substrate site. The active-site Proton acceptor is glutamate 101. Lysine 119 provides a ligand contact to substrate.

It belongs to the ribose 5-phosphate isomerase family. As to quaternary structure, homodimer.

It carries out the reaction aldehydo-D-ribose 5-phosphate = D-ribulose 5-phosphate. It participates in carbohydrate degradation; pentose phosphate pathway; D-ribose 5-phosphate from D-ribulose 5-phosphate (non-oxidative stage): step 1/1. Catalyzes the reversible conversion of ribose-5-phosphate to ribulose 5-phosphate. The protein is Ribose-5-phosphate isomerase A of Stenotrophomonas maltophilia (strain K279a).